The sequence spans 144 residues: Large ribosomal subunit protein uL16 (144 aa).

It belongs to the universal ribosomal protein uL16 family. As to quaternary structure, part of the 50S ribosomal subunit.

Binds 23S rRNA and is also seen to make contacts with the A and possibly P site tRNAs. This chain is Large ribosomal subunit protein uL16, found in Oceanobacillus iheyensis (strain DSM 14371 / CIP 107618 / JCM 11309 / KCTC 3954 / HTE831).